The following is a 235-amino-acid chain: uncharacterized protein (235 aa).

Disordered stretches follow at residues Met1 to Ser36 and Val213 to Gln235.

This is an uncharacterized protein from Homo sapiens (Human).